Consider the following 646-residue polypeptide: DNA mismatch repair protein MutL (646 aa).

Disordered stretches follow at residues 356–380 (FENRTASNPPAEKPDEETDRVNENS) and 415–452 (TKNSEGLFDSEATSNEAASAEIESSEDDVRETEHAKPH). Residues 424–436 (SEATSNEAASAEI) show a composition bias toward low complexity.

Belongs to the DNA mismatch repair MutL/HexB family.

Functionally, this protein is involved in the repair of mismatches in DNA. It is required for dam-dependent methyl-directed DNA mismatch repair. May act as a 'molecular matchmaker', a protein that promotes the formation of a stable complex between two or more DNA-binding proteins in an ATP-dependent manner without itself being part of a final effector complex. The sequence is that of DNA mismatch repair protein MutL from Staphylococcus carnosus (strain TM300).